We begin with the raw amino-acid sequence, 274 residues long: Putative ABC transporter ATP-binding protein MM_1037 (274 aa).

The 234-residue stretch at 2 to 235 (IRLENVSYCY…PSLKDLGLTP (234 aa)) folds into the ABC transporter domain. Residue 35–42 (GRNGSGKS) coordinates ATP.

This sequence belongs to the ABC transporter superfamily.

It is found in the cell membrane. Its function is as follows. Probably part of an ABC transporter complex. Responsible for energy coupling to the transport system. The chain is Putative ABC transporter ATP-binding protein MM_1037 from Methanosarcina mazei (strain ATCC BAA-159 / DSM 3647 / Goe1 / Go1 / JCM 11833 / OCM 88) (Methanosarcina frisia).